The primary structure comprises 314 residues: 1-aminocyclopropane-1-carboxylate oxidase 1 (314 aa).

The region spanning 153 to 253 (PNFGTKVSNY…RMSIASFYNP (101 aa)) is the Fe2OG dioxygenase domain. Fe cation contacts are provided by H177, D179, and H234.

It belongs to the iron/ascorbate-dependent oxidoreductase family. As to quaternary structure, monomer. Fe cation is required as a cofactor.

The catalysed reaction is 1-aminocyclopropane-1-carboxylate + L-ascorbate + O2 = ethene + L-dehydroascorbate + hydrogen cyanide + CO2 + 2 H2O. It participates in alkene biosynthesis; ethylene biosynthesis via S-adenosyl-L-methionine; ethylene from S-adenosyl-L-methionine: step 2/2. This chain is 1-aminocyclopropane-1-carboxylate oxidase 1, found in Malus domestica (Apple).